The primary structure comprises 609 residues: Elongation factor 4 (609 aa).

The 183-residue stretch at 5 to 187 (SKIRNFSIIA…AIVAKIPPPE (183 aa)) folds into the tr-type G domain. Residues 17-22 (DHGKST) and 134-137 (NKID) each bind GTP.

It belongs to the TRAFAC class translation factor GTPase superfamily. Classic translation factor GTPase family. LepA subfamily.

It localises to the cell inner membrane. It carries out the reaction GTP + H2O = GDP + phosphate + H(+). Functionally, required for accurate and efficient protein synthesis under certain stress conditions. May act as a fidelity factor of the translation reaction, by catalyzing a one-codon backward translocation of tRNAs on improperly translocated ribosomes. Back-translocation proceeds from a post-translocation (POST) complex to a pre-translocation (PRE) complex, thus giving elongation factor G a second chance to translocate the tRNAs correctly. Binds to ribosomes in a GTP-dependent manner. This chain is Elongation factor 4, found in Erythrobacter litoralis (strain HTCC2594).